The sequence spans 444 residues: Probable galactarate/D-glucarate transporter GarP (444 aa).

Topologically, residues 1-11 are cytoplasmic; sequence MILDTVDEKKK. Residues 12-32 form a helical membrane-spanning segment; sequence GVHTRYLILLIIFIVTAVNYA. The Periplasmic portion of the chain corresponds to 33–56; sequence DRATLSIAGTEVAKELQLSAVSMG. Residues 57 to 77 traverse the membrane as a helical segment; sequence YIFSAFGWAYLLMQIPGGWLL. At 78–89 the chain is on the cytoplasmic side; sequence DKFGSKKVYTYS. The next 2 membrane-spanning stretches (helical) occupy residues 90–110 and 111–131; these read LFFW…PLAW and AGIS…PSFP. At 132 to 157 the chain is on the cytoplasmic side; the sequence is ANARIVAAWFPTKERGTASAIFNSAQ. The next 2 membrane-spanning stretches (helical) occupy residues 158-178 and 179-199; these read YFSL…WGWE and HVFT…IKLI. The Cytoplasmic segment spans residues 200–252; it reads HNPTDHPRMSAEELKFISENGAVVDMDHKKPGSAAASGPKLHYIKQLLSNRMM. A helical membrane pass occupies residues 253–273; sequence LGVFFGQYFINTITWFFLTWF. Over 274–288 the chain is Periplasmic; the sequence is PIYLVQEKGMSILKV. A helical membrane pass occupies residues 289–309; it reads GLVASIPALCGFAGGVLGGVF. Residues 310-319 lie on the Cytoplasmic side of the membrane; it reads SDYLIKRGLS. Residues 320–340 traverse the membrane as a helical segment; it reads LTLARKLPIVLGMLLASTIIL. Topologically, residues 341–350 are periplasmic; it reads CNYTNNTTLV. A helical transmembrane segment spans residues 351-371; the sequence is VMLMALAFFGKGFGALGWPVI. Residues 372 to 385 are Cytoplasmic-facing; that stretch reads SDTAPKEIVGLCGG. Residues 386-406 form a helical membrane-spanning segment; the sequence is VFNVFGNVASIVTPLVIGYLV. The Periplasmic segment spans residues 407-413; that stretch reads SELHSFN. A helical membrane pass occupies residues 414–434; that stretch reads AALVFVGCSALMAMVCYLFVV. Over 435–444 the chain is Cytoplasmic; it reads GDIKRMELQK.

The protein belongs to the major facilitator superfamily. Phthalate permease family.

It localises to the cell inner membrane. The enzyme catalyses galactarate(in) + H(+)(in) = galactarate(out) + H(+)(out). It catalyses the reaction D-glucarate(in) + H(+)(in) = D-glucarate(out) + H(+)(out). It carries out the reaction (R)-glycerate(in) + H(+)(in) = (R)-glycerate(out) + H(+)(out). Functionally, probably involved in the uptake of galactarate and/or D-glucarate. May also transport D-glycerate. The polypeptide is Probable galactarate/D-glucarate transporter GarP (Escherichia coli (strain K12)).